The primary structure comprises 94 residues: Cell division topological specificity factor (94 aa).

Belongs to the MinE family.

Functionally, prevents the cell division inhibition by proteins MinC and MinD at internal division sites while permitting inhibition at polar sites. This ensures cell division at the proper site by restricting the formation of a division septum at the midpoint of the long axis of the cell. The sequence is that of Cell division topological specificity factor from Alkaliphilus metalliredigens (strain QYMF).